The sequence spans 97 residues: Defensin alpha 4 (97 aa).

The signal sequence occupies residues 1–19 (MRIIAILAAILLVALQVRA). Positions 20 to 63 (GPLQARGDEAPGQEQRGPEDQDISISFAWDKSSALQVSGSTRGM) are excised as a propeptide. Cystine bridges form between cysteine 65/cysteine 93, cysteine 67/cysteine 82, and cysteine 72/cysteine 92. Aspartate 97 is a propeptide.

Belongs to the alpha-defensin family. In terms of assembly, homodimer; homodimerization seems to be required for killing S.aureus, but not E.coli. Interacts with CD4. Interacts with Bacillus anthracis lef; homodimerization is required for the interaction. Post-translationally, the three-dimensional structure formed by the three intramolecular disulfide bridges is indispensable for effective bacterial killing.

The protein localises to the secreted. It is found in the cytoplasmic vesicle. The protein resides in the secretory vesicle. Functionally, host-defense peptide that has antimicrobial activity against Gram-negative bacteria, and to a lesser extent also against Gram-positive bacteria and fungi. Exhibits antimicrobial activity against Gram-negative E.coli and E.aerogenes and Gram-positive S.faecalis, S.aureus and B.cereus and the yeast C.albicans (in vitro). Inhibits corticotropin (ACTH)-stimulated corticosterone production (in vitro). Inhibits enzymatic activity of B.anthracis lef/anthrax lethal factor (in vitro). The protein is Defensin alpha 4 (DEFA4) of Pan troglodytes (Chimpanzee).